The sequence spans 357 residues: Elongation factor Ts (357 aa).

Residues 82–85 (TDFV) form an involved in Mg(2+) ion dislocation from EF-Tu region.

It belongs to the EF-Ts family.

It is found in the cytoplasm. Its function is as follows. Associates with the EF-Tu.GDP complex and induces the exchange of GDP to GTP. It remains bound to the aminoacyl-tRNA.EF-Tu.GTP complex up to the GTP hydrolysis stage on the ribosome. The chain is Elongation factor Ts from Campylobacter jejuni subsp. jejuni serotype O:23/36 (strain 81-176).